The primary structure comprises 153 residues: Transcriptional repressor NrdR (153 aa).

A zinc finger spans residues 3–34 (CPFCNHLHDKVVDSRESKEGDAIRRRRECLEC). Residues 49-139 (YMVVKKDGRR…VYRDFQDEQA (91 aa)) form the ATP-cone domain.

It belongs to the NrdR family. The cofactor is Zn(2+).

Negatively regulates transcription of bacterial ribonucleotide reductase nrd genes and operons by binding to NrdR-boxes. This Solibacter usitatus (strain Ellin6076) protein is Transcriptional repressor NrdR.